Here is a 218-residue protein sequence, read N- to C-terminus: NAD(P)H-hydrate epimerase (218 aa).

Residues 9–215 (MKKIDQYAID…DIGIPQKAIR (207 aa)) enclose the YjeF N-terminal domain. Residue 55–59 (NNGAD) participates in (6S)-NADPHX binding. Residues asparagine 56 and aspartate 127 each coordinate K(+). Residues 131-137 (GTGLNRT) and aspartate 160 each bind (6S)-NADPHX. K(+) is bound at residue serine 163.

It belongs to the NnrE/AIBP family. K(+) is required as a cofactor.

The enzyme catalyses (6R)-NADHX = (6S)-NADHX. It catalyses the reaction (6R)-NADPHX = (6S)-NADPHX. Functionally, catalyzes the epimerization of the S- and R-forms of NAD(P)HX, a damaged form of NAD(P)H that is a result of enzymatic or heat-dependent hydration. This is a prerequisite for the S-specific NAD(P)H-hydrate dehydratase to allow the repair of both epimers of NAD(P)HX. The chain is NAD(P)H-hydrate epimerase from Anaerococcus prevotii (strain ATCC 9321 / DSM 20548 / JCM 6508 / NCTC 11806 / PC1) (Peptostreptococcus prevotii).